The sequence spans 442 residues: Mimosinase, chloroplastic (442 aa).

A chloroplast-targeting transit peptide spans Met1 to Cys35. Residues Tyr103, Arg105, Gly133, Met134, Ser252, and Thr254 each coordinate pyridoxal 5'-phosphate. N6-(pyridoxal phosphate)lysine is present on Lys255.

It belongs to the trans-sulfuration enzymes family. Forms homodimers. May form homotetramers from two homodimers. It depends on pyridoxal 5'-phosphate as a cofactor.

It is found in the plastid. It localises to the chloroplast. The catalysed reaction is L-mimosine + H2O = 3-hydroxy-4H-pyrid-4-one + pyruvate + NH4(+). The enzyme catalyses L,L-cystathionine + H2O = L-homocysteine + pyruvate + NH4(+). It catalyses the reaction an S-substituted L-cysteine + H2O = a thiol + pyruvate + NH4(+). Its function is as follows. Catalyzes the degradation of mimosine, which is a toxic secondary metabolite found in all Mimosa and Leucaena species. Catalyzes the degradation of cystathionine, but seems to have lower preference toward cystathionine over mimosine. This Mimosa pudica (Sensitive plant) protein is Mimosinase, chloroplastic.